A 351-amino-acid chain; its full sequence is Protein-glutamate methylesterase/protein-glutamine glutaminase (351 aa).

In terms of domain architecture, Response regulatory spans 6 to 123 (RVLVVDDSPT…ARPFGDLADK (118 aa)). The residue at position 57 (D57) is a 4-aspartylphosphate. Positions 154 to 346 (YRAGRKVVAI…EEILKLTTAR (193 aa)) constitute a CheB-type methylesterase domain. Active-site residues include S166, H192, and D288.

It belongs to the CheB family. Post-translationally, phosphorylated by CheA. Phosphorylation of the N-terminal regulatory domain activates the methylesterase activity.

Its subcellular location is the cytoplasm. The catalysed reaction is [protein]-L-glutamate 5-O-methyl ester + H2O = L-glutamyl-[protein] + methanol + H(+). It carries out the reaction L-glutaminyl-[protein] + H2O = L-glutamyl-[protein] + NH4(+). Involved in chemotaxis. Part of a chemotaxis signal transduction system that modulates chemotaxis in response to various stimuli. Catalyzes the demethylation of specific methylglutamate residues introduced into the chemoreceptors (methyl-accepting chemotaxis proteins or MCP) by CheR. Also mediates the irreversible deamidation of specific glutamine residues to glutamic acid. The polypeptide is Protein-glutamate methylesterase/protein-glutamine glutaminase (Agrobacterium fabrum (strain C58 / ATCC 33970) (Agrobacterium tumefaciens (strain C58))).